A 64-amino-acid chain; its full sequence is MATKTVRIEQIGSPIRREASQRATLVGLKLNKLHRVSELEDTPSVRGMIRKVAHLVRVLDDAAA.

This sequence belongs to the universal ribosomal protein uL30 family. As to quaternary structure, part of the 50S ribosomal subunit.

In Methylorubrum extorquens (strain CM4 / NCIMB 13688) (Methylobacterium extorquens), this protein is Large ribosomal subunit protein uL30.